Reading from the N-terminus, the 340-residue chain is Ferrochelatase (340 aa).

Residues His-189 and Glu-292 each contribute to the Fe cation site.

Belongs to the ferrochelatase family.

It is found in the cytoplasm. It carries out the reaction heme b + 2 H(+) = protoporphyrin IX + Fe(2+). It functions in the pathway porphyrin-containing compound metabolism; protoheme biosynthesis; protoheme from protoporphyrin-IX: step 1/1. Catalyzes the ferrous insertion into protoporphyrin IX. The protein is Ferrochelatase of Pseudomonas syringae pv. syringae (strain B728a).